We begin with the raw amino-acid sequence, 511 residues long: MTLSHSALQFWTHLYLWCLLLVPAVLTQQGSHTHAEDRLFKHLFGGYNRWARPVPNTSDVVIVRFGLSIAQLIDVDEKNQMMTTNVWLKQEWNDYKLRWDPAEFGNVTSLRVPSEMIWIPDIVLYNNADGEFAVTHMTKAHLFFTGTVHWVPPAIYKSSCSIDVTFFPFDQQNCKMKFGSWTYDKAKIDLEQMERTVDLKDYWESGEWAIINATGTYNSKKYDCCAEIYPDVTYYFVIRRLPLFYTINLIIPCLLISCLTVLVFYLPSECGEKITLCISVLLSLTVFLLLITEIIPSTSLVIPLIGEYLLFTMIFVTLSIVITVFVLNVHHRSPSTHNMPNWVRVALLGRVPRWLMMNRPLPPMELHGSPDLKLSPSYHWLETNMDAGEREETEEEEEEEDENICVCAGLPDSSMGVLYGHGGLHLRAMEPETKTPSQASEILLSPQIQKALEGVHYIADRLRSEDADSSVKEDWKYVAMVVDRIFLWLFIIVCFLGTIGLFLPPFLAGMI.

Positions 1-27 (MTLSHSALQFWTHLYLWCLLLVPAVLT) are cleaved as a signal peptide. Residues 28-241 (QQGSHTHAED…VTYYFVIRRL (214 aa)) are Extracellular-facing. Residues Asn56 and Asn106 are each glycosylated (N-linked (GlcNAc...) asparagine). Cys160 and Cys174 are oxidised to a cystine. The N-linked (GlcNAc...) asparagine glycan is linked to Asn212. A disulfide bridge links Cys224 with Cys225. The next 3 membrane-spanning stretches (helical) occupy residues 242 to 266 (PLFYTINLIIPCLLISCLTVLVFYL), 274 to 292 (ITLCISVLLSLTVFLLLIT), and 308 to 329 (YLLFTMIFVTLSIVITVFVLNV). Topologically, residues 330–484 (HHRSPSTHNM…WKYVAMVVDR (155 aa)) are cytoplasmic. Residues 485 to 503 (IFLWLFIIVCFLGTIGLFL) form a helical membrane-spanning segment.

The protein belongs to the ligand-gated ion channel (TC 1.A.9) family. Acetylcholine receptor (TC 1.A.9.1) subfamily. Alpha-2/CHRNA2 sub-subfamily. As to quaternary structure, neuronal AChR seems to be composed of two different types of subunits: alpha and non-alpha (beta). CHRNA2/Alpha-2 subunit can be combined to CHRNB2/beta-2 or CHRNB4/beta-4 to give rise to functional receptors. The alpha-2:beta-2 nAChR complex is proposed to be a heteropentamer with two subtypes: LS (low agonist sensitivity) with a (alpha-2)3:(beta-2)2 and HS (high agonist sensitivity) with a (alpha-2)2:(beta-2)3 stoichiometry; the subtypes differ in their subunit binding interfaces which are involved in ligand binding.

The protein resides in the synaptic cell membrane. It is found in the cell membrane. The catalysed reaction is Ca(2+)(in) = Ca(2+)(out). The enzyme catalyses K(+)(in) = K(+)(out). It catalyses the reaction Na(+)(in) = Na(+)(out). Functionally, component of neuronal acetylcholine receptors (nAChRs) that function as pentameric, ligand-gated cation channels with high calcium permeability among other activities. nAChRs are excitatory neurotrasnmitter receptors formed by a collection of nAChR subunits known to mediate synaptic transmission in the nervous system and the neuromuscular junction. Each nAchR subunit confers differential attributes to channel properties, including activation, deactivation and desensitization kinetics, pH sensitivity, cation permeability, and binding to allosteric modulators. CHRNA2 forms heteropentameric neuronal acetylcholine receptors with CHRNB2 and CHRNB4 and plays a role in nicotine dependence. This is Neuronal acetylcholine receptor subunit alpha-2 (Chrna2) from Rattus norvegicus (Rat).